A 242-amino-acid chain; its full sequence is ATP synthase subunit a, chloroplastic (242 aa).

5 consecutive transmembrane segments (helical) span residues 34-54, 93-113, 132-152, 188-210, and 222-242; these read GQVL…AVLG, VPFI…GAII, INTT…AGLS, LFGN…PLVI, and GSVQ…EALE.

The protein belongs to the ATPase A chain family. As to quaternary structure, F-type ATPases have 2 components, CF(1) - the catalytic core - and CF(0) - the membrane proton channel. CF(1) has five subunits: alpha(3), beta(3), gamma(1), delta(1), epsilon(1). CF(0) has four main subunits: a, b, b' and c.

Its subcellular location is the plastid. The protein resides in the chloroplast thylakoid membrane. In terms of biological role, key component of the proton channel; it plays a direct role in the translocation of protons across the membrane. The polypeptide is ATP synthase subunit a, chloroplastic (Trieres chinensis (Marine centric diatom)).